Here is a 258-residue protein sequence, read N- to C-terminus: Pimeloyl-[acyl-carrier protein] methyl ester esterase (258 aa).

In terms of domain architecture, AB hydrolase-1 spans 16-242; that stretch reads LVLLHGWGLN…AAHAPFISHP (227 aa). Substrate-binding positions include Trp22, 82 to 83, and 143 to 147; these read SM and FLALQ. Catalysis depends on Ser82, which acts as the Nucleophile. Active-site residues include Asp207 and His235. Residue His235 coordinates substrate.

Belongs to the AB hydrolase superfamily. Carboxylesterase BioH family. As to quaternary structure, monomer.

It is found in the cytoplasm. It catalyses the reaction 6-carboxyhexanoyl-[ACP] methyl ester + H2O = 6-carboxyhexanoyl-[ACP] + methanol + H(+). It participates in cofactor biosynthesis; biotin biosynthesis. The physiological role of BioH is to remove the methyl group introduced by BioC when the pimeloyl moiety is complete. It allows to synthesize pimeloyl-ACP via the fatty acid synthetic pathway through the hydrolysis of the ester bonds of pimeloyl-ACP esters. This is Pimeloyl-[acyl-carrier protein] methyl ester esterase from Yersinia pseudotuberculosis serotype O:1b (strain IP 31758).